The primary structure comprises 120 residues: Large ribosomal subunit protein uL18 (120 aa).

The protein belongs to the universal ribosomal protein uL18 family. In terms of assembly, part of the 50S ribosomal subunit; part of the 5S rRNA/L5/L18/L25 subcomplex. Contacts the 5S and 23S rRNAs.

In terms of biological role, this is one of the proteins that bind and probably mediate the attachment of the 5S RNA into the large ribosomal subunit, where it forms part of the central protuberance. This chain is Large ribosomal subunit protein uL18, found in Staphylococcus haemolyticus (strain JCSC1435).